The chain runs to 372 residues: L-selectin (372 aa).

The N-terminal stretch at 1-28 (MIFPRKCQSTQRDLWNIFKLWGWTMLCC) is a signal peptide. Positions 29–38 (DFLAHHGTDC) are excised as a propeptide. The Extracellular portion of the chain corresponds to 39–332 (WTYHYSENPM…FSMIKEGDYN (294 aa)). The region spanning 55-155 (RFCRENYTDL…ACHKPKAALC (101 aa)) is the C-type lectin domain. 10 disulfide bridges follow: C57–C155, C128–C147, C128–C160, C160–C171, C165–C180, C182–C191, C197–C241, C227–C254, C259–C303, and C289–C316. N-linked (GlcNAc...) asparagine glycans are attached at residues N60 and N104. Residues E118, N120, E126, N143, and D144 each contribute to the Ca(2+) site. An EGF-like domain is found at 156–192 (YTASCQPWSCSGHGECVEIINNYTCNCDVGYYGPQCQ). N177 is a glycosylation site (N-linked (GlcNAc...) asparagine). Sushi domains are found at residues 195 to 256 (IQCE…TCQV) and 257 to 318 (IQCE…ICQK). N-linked (GlcNAc...) asparagine glycans are attached at residues N226, N232, N246, and N271. Residues 333–355 (PLFIPVAVIVTAFSGLAFIIWLA) form a helical membrane-spanning segment. Residues 356 to 372 (RRLKKGKKSKKSMDDPY) are Cytoplasmic-facing.

The protein belongs to the selectin/LECAM family. In terms of assembly, interaction with SELPLG/PSGL1 and PODXL2 is required for promoting recruitment and rolling of leukocytes. This interaction is dependent on the sialyl Lewis X glycan modification of SELPLG and PODXL2, and tyrosine sulfation modifications of SELPLG. Sulfation on 'Tyr-51' of SELPLG is important for L-selectin binding. In terms of processing, N-glycosylated.

Its subcellular location is the cell membrane. In terms of biological role, calcium-dependent lectin that mediates cell adhesion by binding to glycoproteins on neighboring cells. Mediates the adherence of lymphocytes to endothelial cells of high endothelial venules in peripheral lymph nodes. Promotes initial tethering and rolling of leukocytes in endothelia. The sequence is that of L-selectin (SELL) from Papio hamadryas (Hamadryas baboon).